A 521-amino-acid chain; its full sequence is BAR/IMD domain-containing adapter protein 2 (521 aa).

The IMD domain maps to 1–250 (MSLSRSEEMH…VQLMQQMGNS (250 aa)). A coiled-coil region spans residues 132 to 153 (DALDKCQAELKKLRKKSQGSKN). Phosphoserine is present on residues serine 262, serine 324, serine 326, and serine 337. The interval 297–370 (APVMNGVSGP…TLPRSSSMAA (74 aa)) is disordered. Positions 321-333 (QPKSTSPPQSQSK) are enriched in low complexity. Phosphothreonine is present on threonine 341. Residue serine 347 is modified to Phosphoserine. Residues 353 to 368 (SYATTENKTLPRSSSM) show a composition bias toward polar residues. Threonine 361 carries the post-translational modification Phosphothreonine. Phosphoserine is present on residues serine 367, serine 385, serine 396, and serine 455. The SH3 domain maps to 375–438 (NGRMRVKAIF…PFSYTRVLDN (64 aa)). A disordered region spans residues 450–471 (QGKSSSTGNLLDKEDLALPPPD).

As to quaternary structure, homodimer. Interacts with CDC42 and RAC1 that have been activated by GTP binding. Interacts with ATN1, ADGRB1, DIAPH1, EPS8, SHANK1, SHANK2, SHANK3, TIAM1, WASF1 and WASF2. Interacts with ENAH after recruitment of CDC42. Post-translationally, phosphorylated on tyrosine residues by INSR in response to insulin treatment.

Its subcellular location is the cytoplasm. The protein localises to the membrane. It is found in the cell projection. The protein resides in the filopodium. It localises to the ruffle. Its subcellular location is the cytoskeleton. Its function is as follows. Adapter protein that links membrane-bound small G-proteins to cytoplasmic effector proteins. Necessary for CDC42-mediated reorganization of the actin cytoskeleton and for RAC1-mediated membrane ruffling. Involved in the regulation of the actin cytoskeleton by WASF family members and the Arp2/3 complex. Plays a role in neurite growth. Acts syngeristically with ENAH to promote filipodia formation. Plays a role in the reorganization of the actin cytoskeleton in response to bacterial infection. Participates in actin bundling when associated with EPS8, promoting filopodial protrusions. The protein is BAR/IMD domain-containing adapter protein 2 (BAIAP2) of Bos taurus (Bovine).